We begin with the raw amino-acid sequence, 365 residues long: Chorismate synthase (365 aa).

Arg-47 contributes to the NADP(+) binding site. FMN is bound by residues 124–126 (RAS), Gly-287, 302–306 (KPTAT), and Arg-328.

It belongs to the chorismate synthase family. As to quaternary structure, homotetramer. It depends on FMNH2 as a cofactor.

The enzyme catalyses 5-O-(1-carboxyvinyl)-3-phosphoshikimate = chorismate + phosphate. It participates in metabolic intermediate biosynthesis; chorismate biosynthesis; chorismate from D-erythrose 4-phosphate and phosphoenolpyruvate: step 7/7. Catalyzes the anti-1,4-elimination of the C-3 phosphate and the C-6 proR hydrogen from 5-enolpyruvylshikimate-3-phosphate (EPSP) to yield chorismate, which is the branch point compound that serves as the starting substrate for the three terminal pathways of aromatic amino acid biosynthesis. This reaction introduces a second double bond into the aromatic ring system. The sequence is that of Chorismate synthase from Prochlorococcus marinus (strain MIT 9215).